Consider the following 541-residue polypeptide: MAYESLASEPNDGVTDHNDDALYVGIDTLKAARDNIKGWYLYSFSSEPFVVSAVATYVPLLLEQFARINGVQLDDHNAPCSTSSSDKCVLGLFNNRVFVDSSSFALYVFSLSVLFQTVVVISVSGMVDRWKTISFRKNVLVTFGMVGAFATVLISLLNETQYYSLVVYYIVANSCYGVINVVGNSLLPLFVDDLVRLQPDHTVPAAEELSLDTDDKDGLTTVISGRGASIGYSAALVVQLMSILLVRLSPSKQDIQYAVFFVGLWWAVWQFPMYWLLSDSIIPDQQSNQAIANGRYYDIDGSIFTFVNLSSLKYGWKLLGEALKHATLLRDVVIFLIGWFILSDSLTTINSTAIIFAKTELHMSTINLISLSIITMISAMVGAFAIPQIVSTSLHVPPQRTILLIICWASIIPLYGMLGFIFQSFGLKHQFEMFILGVWYGISMGSVAAVSRSLFTIIIPKGRESTFFSLFSITDKGSSIVGPFIIGIVTDKTHNIRYSFFILFILLVFSLPIFKMLNVERGKREAEEISKLHVNIDPIQD.

6 helical membrane-spanning segments follow: residues 41–61 (LYSF…VPLL), 103–123 (SFAL…VISV), 139–159 (VLVT…LLNE), 163–183 (YSLV…NVVG), 228–248 (ASIG…LVRL), and 257–277 (YAVF…YWLL). N308 carries N-linked (GlcNAc...) asparagine glycosylation. 6 consecutive transmembrane segments (helical) span residues 332–352 (VVIF…INST), 366–386 (INLI…AFAI), 402–422 (ILLI…GFIF), 431–451 (FEMF…AAVS), 470–490 (LFSI…GIVT), and 499–519 (SFFI…MLNV).

It belongs to the ATG22 family.

It is found in the vacuole membrane. In terms of biological role, vacuolar effluxer which mediate the efflux of amino acids resulting from autophagic degradation. The release of autophagic amino acids allows the maintenance of protein synthesis and viability during nitrogen starvation. This is Autophagy-related protein 22 (ATG22) from Candida glabrata (strain ATCC 2001 / BCRC 20586 / JCM 3761 / NBRC 0622 / NRRL Y-65 / CBS 138) (Yeast).